Consider the following 199-residue polypeptide: Recombination protein RecR (199 aa).

The segment at 58–73 (CKKCFNLTSEEECEIC) adopts a C4-type zinc-finger fold. The region spanning 81-175 (KIICVVAETK…KVTRIAYGLP (95 aa)) is the Toprim domain.

Belongs to the RecR family.

Functionally, may play a role in DNA repair. It seems to be involved in an RecBC-independent recombinational process of DNA repair. It may act with RecF and RecO. This Prochlorococcus marinus subsp. pastoris (strain CCMP1986 / NIES-2087 / MED4) protein is Recombination protein RecR.